A 117-amino-acid polypeptide reads, in one-letter code: Large ribosomal subunit protein bL20 (117 aa).

Belongs to the bacterial ribosomal protein bL20 family.

Binds directly to 23S ribosomal RNA and is necessary for the in vitro assembly process of the 50S ribosomal subunit. It is not involved in the protein synthesizing functions of that subunit. The sequence is that of Large ribosomal subunit protein bL20 from Vibrio cholerae serotype O1 (strain ATCC 39541 / Classical Ogawa 395 / O395).